A 307-amino-acid polypeptide reads, in one-letter code: D-alanine--D-alanine ligase (307 aa).

An ATP-grasp domain is found at 105–304; the sequence is KMLWKGFGLP…FEQLVVKILE (200 aa). Residue 135-190 participates in ATP binding; it reads VERLGLPLMVKPSREGSSVGLTKVNAVEELKNAVDLALTHDDTVLIEEWLSGIEMT. Mg(2+) is bound by residues Asp-258, Glu-271, and Asn-273.

Belongs to the D-alanine--D-alanine ligase family. Requires Mg(2+) as cofactor. Mn(2+) is required as a cofactor.

It is found in the cytoplasm. The enzyme catalyses 2 D-alanine + ATP = D-alanyl-D-alanine + ADP + phosphate + H(+). It participates in cell wall biogenesis; peptidoglycan biosynthesis. Functionally, cell wall formation. The chain is D-alanine--D-alanine ligase from Mannheimia succiniciproducens (strain KCTC 0769BP / MBEL55E).